The sequence spans 96 residues: UPF0235 protein Sputcn32_2690 (96 aa).

This sequence belongs to the UPF0235 family.

The protein is UPF0235 protein Sputcn32_2690 of Shewanella putrefaciens (strain CN-32 / ATCC BAA-453).